A 382-amino-acid chain; its full sequence is Lipid-A-disaccharide synthase (382 aa).

Belongs to the LpxB family.

The enzyme catalyses 2-N,3-O-bis[(3R)-3-hydroxytetradecanoyl]-alpha-D-glucosaminyl 1-phosphate + UDP-2-N,3-O-bis[(3R)-3-hydroxytetradecanoyl]-alpha-D-glucosamine = lipid A disaccharide (E. coli) + UDP + H(+). It carries out the reaction a lipid X + a UDP-2-N,3-O-bis[(3R)-3-hydroxyacyl]-alpha-D-glucosamine = a lipid A disaccharide + UDP + H(+). It functions in the pathway glycolipid biosynthesis; lipid IV(A) biosynthesis; lipid IV(A) from (3R)-3-hydroxytetradecanoyl-[acyl-carrier-protein] and UDP-N-acetyl-alpha-D-glucosamine: step 5/6. Functionally, condensation of UDP-2,3-diacylglucosamine and 2,3-diacylglucosamine-1-phosphate to form lipid A disaccharide, a precursor of lipid A, a phosphorylated glycolipid that anchors the lipopolysaccharide to the outer membrane of the cell. This is Lipid-A-disaccharide synthase from Citrobacter koseri (strain ATCC BAA-895 / CDC 4225-83 / SGSC4696).